The following is a 53-amino-acid chain: Large ribosomal subunit protein bL32c (53 aa).

It belongs to the bacterial ribosomal protein bL32 family.

The protein localises to the plastid. The protein resides in the chloroplast. This is Large ribosomal subunit protein bL32c (rpl32) from Guillardia theta (Cryptophyte).